A 1036-amino-acid chain; its full sequence is MSLFHVLGFGVKIGHLFWMLCCWFVSWFVDNGIEDKSGLLVGSVGDLEKTKMTTLKKKNKMWFWNKISSSGLKIPSFSYQFLGSVKFNKAWWRKLVVVWVVFWVLVSIWTFWYFSSQAMEKRKETLASMCDERARMLQDQFNVSMNHVQAMSILISTFHHGKIPSAIDQRTFSEYTDRTSFERPLTSGVAYAMRVLHSEREEFERQQGWTIRKMYSLEQNPVHKDDYDLEALEPSPVQEEYAPVIFAQDTVSHVVSLDMLSGKEDRENVLRARSSGKGVLTAPFPLIKTNRLGVILTFAVYKRDLPSNATPKERIEATNGYLGGVFDIESLVENLLQQLASKQTILVNVYDITNHSQPISMYGTNVSADGLERVSPLIFGDPLRKHEMRCRFKQKPPWPVLSMVTSFGILVIALLVAHIIHATVSRIHKVEEDCDKMKQLKKKAEAADVAKSQFLATVSHEIRTPMNGVLGMLHMLMDTELDVTQQDYVRTAQASGKALVSLINEVLDQAKIESGKLELEEVRFDLRGILDDVLSLFSSKSQQKGVELAVYISDRVPDMLIGDPGRFRQILTNLMGNSIKFTEKGHIFVTVHLVDELFESIDGETASSPESTLSGLPVADRQRSWENFKAFSSNGHRSFEPSPPDINLIVSVEDTGVGIPVEAQSRIFTPFMQVGPSISRTHGGTGIGLSISKCLVGLMKGEIGFSSTPKVGSTFTFTAVFSNGMQPAERKNDNNQPIFSEFRGMKAVVVDHRPARAKVSWYHFQRLGIRVEVVPRVEQALHYLKIGTTTVNMILIEQEIWNREADDFIKKLQKDPLFLSPKLILLANSVESSISEALCTGIDPPIVIVKPLRASMLAATLQRGLGIGIREPPQHKGPPALILRNLLLGRKILIVDDNNVNLRVAAGALKKYGADVVCAESGIKAISLLKPPHEFDACFMDIQMPEMDGFEATRRIRDMEEEMNKRIKNGEALIVENGNKTSWHLPVLAMTADVIQATHEECLKCGMDGYVSKPFEAEQLYREVSRFFNSPSDTES.

Residues 1 to 8 (MSLFHVLG) lie on the Extracellular side of the membrane. The helical transmembrane segment at 9–29 (FGVKIGHLFWMLCCWFVSWFV) threads the bilayer. The Cytoplasmic segment spans residues 30-94 (DNGIEDKSGL…VKFNKAWWRK (65 aa)). Residues 95 to 115 (LVVVWVVFWVLVSIWTFWYFS) form a helical membrane-spanning segment. Over 116–399 (SQAMEKRKET…CRFKQKPPWP (284 aa)) the chain is Extracellular. The region spanning 163–389 (IPSAIDQRTF…GDPLRKHEMR (227 aa)) is the CHASE domain. A helical transmembrane segment spans residues 400 to 420 (VLSMVTSFGILVIALLVAHII). The Cytoplasmic portion of the chain corresponds to 421–1036 (HATVSRIHKV…FFNSPSDTES (616 aa)). A Histidine kinase domain is found at 457–723 (TVSHEIRTPM…TFTFTAVFSN (267 aa)). The residue at position 460 (His460) is a Phosphohistidine; by autocatalysis. Response regulatory domains lie at 746–865 (KAVV…QRGL) and 891–1028 (KILI…SRFF). Asp941 bears the 4-aspartylphosphate mark.

Interacts with AHK2, AHK4, AHP1, AHP2, AHP3, AHP5 and At5g43560. In terms of processing, autophosphorylated predominantly on His residues. Activation probably requires a transfer of a phosphate group between a His in the transmitter domain and an Asp of the receiver domain. In terms of tissue distribution, mostly expressed in leaves and flowers, and, to a lower extent, in roots, stems, and siliques, especially in the vascular tissues. Present in seedlings.

It localises to the cell membrane. The protein resides in the endoplasmic reticulum membrane. It catalyses the reaction ATP + protein L-histidine = ADP + protein N-phospho-L-histidine.. Activated by cytokinins to initiate phosphorelay signaling. This cytokinin-mediated activation is repressed by the trans-zeatin antagonists 6-(2-hydroxy-3-methylbenzylamino)purine (PI-55) and 6-(2,5-Dihydroxybenzylamino)purine (LGR-991). Its function is as follows. Cytokinins (CK) receptor related to bacterial two-component regulators. Functions as a histidine kinase and transmits the stress signal to a downstream MAPK cascade. This protein undergoes an ATP-dependent autophosphorylation at a conserved histidine residue in the kinase core, and a phosphoryl group is then transferred to a conserved aspartate residue in the receiver domain. In the presence of cytokinin, feeds phosphate to phosphorelay-integrating histidine phosphotransfer protein (HPt) and activates subsequent cascade. Involved in meristems establishment in seedlings. Redundant negative regulator of drought and salt stress responses and abscisic acid (ABA) signaling. Together with AHK2, plays a negative regulatory role in cold stress signaling via inhibition of ABA response, occurring independently of the cold acclimation pathway. Redundant positive regulator of cytokinin signaling that regulates many developmental processes including seed germination, cell division, seed size, chlorophyll retention during leaf senescence, root repression and shoot promotion. Can interact with isoprenoid-type cytokinins trans-zeatin (tZ and tZR), cis-zeatin (cZ), dihydrozeatin (DZ), buta-2,3-dienyladenine (HA-8), penta-2,3-dienyladenine (HA-1), 4-methyl-penta-2,3-dienyladenine (HA-10), 4-hydroxy-2-butynyladenine (RM1), 2-propynyladenine (RM3), 2-butynyladenine (RM6), and cytokinin ribosides and ribotides. Together with AHK4, involved in the cytokinin-dependent responses to Pi starvation and sucrose stresses. Promotes cytokinin-mediated leaf longevity through a specific phosphorylation of the response regulator ARR2. Involved in alkamides (e.g. N-isobutyl decanamide) and N-acylethanolamides (NAE) signaling that control meristematic activity and differentiation processes during plant development. Contributes to vascular bundle formation and secondary growth in a cytokinin-dependent manner, probably by promoting the maintenance of mitotic activity and/or identity of procambial cells. Plays a role in the cytokinin-mediated repression of the iron uptake pathway. Required by the cytokinin-dependent flower development regulation pathway. The protein is Histidine kinase 3 (AHK3) of Arabidopsis thaliana (Mouse-ear cress).